The following is a 304-amino-acid chain: Quinolinate synthase (304 aa).

The iminosuccinate site is built by H23 and S40. Residue C85 coordinates [4Fe-4S] cluster. Iminosuccinate-binding positions include 111–113 and S128; that span reads YIN. Position 171 (C171) interacts with [4Fe-4S] cluster. Iminosuccinate is bound by residues 197-199 and T214; that span reads HPE. Residue C259 participates in [4Fe-4S] cluster binding.

Belongs to the quinolinate synthase family. Type 2 subfamily. The cofactor is [4Fe-4S] cluster.

It localises to the cytoplasm. It catalyses the reaction iminosuccinate + dihydroxyacetone phosphate = quinolinate + phosphate + 2 H2O + H(+). The protein operates within cofactor biosynthesis; NAD(+) biosynthesis; quinolinate from iminoaspartate: step 1/1. Catalyzes the condensation of iminoaspartate with dihydroxyacetone phosphate to form quinolinate. The protein is Quinolinate synthase of Clostridioides difficile (strain 630) (Peptoclostridium difficile).